The sequence spans 280 residues: Putative pyruvate, phosphate dikinase regulatory protein (280 aa).

Residue Gly158 to Thr165 participates in ADP binding.

This sequence belongs to the pyruvate, phosphate/water dikinase regulatory protein family. PDRP subfamily.

The catalysed reaction is N(tele)-phospho-L-histidyl/L-threonyl-[pyruvate, phosphate dikinase] + ADP = N(tele)-phospho-L-histidyl/O-phospho-L-threonyl-[pyruvate, phosphate dikinase] + AMP + H(+). It carries out the reaction N(tele)-phospho-L-histidyl/O-phospho-L-threonyl-[pyruvate, phosphate dikinase] + phosphate + H(+) = N(tele)-phospho-L-histidyl/L-threonyl-[pyruvate, phosphate dikinase] + diphosphate. Its function is as follows. Bifunctional serine/threonine kinase and phosphorylase involved in the regulation of the pyruvate, phosphate dikinase (PPDK) by catalyzing its phosphorylation/dephosphorylation. The polypeptide is Putative pyruvate, phosphate dikinase regulatory protein (Lactobacillus johnsonii (strain CNCM I-12250 / La1 / NCC 533)).